The chain runs to 457 residues: Nuclear distribution protein PAC1 (457 aa).

Residues 73 to 106 (SSIVRLQRRIIELEKEIQELTDENENLRENGPSS) adopt a coiled-coil conformation. WD repeat units lie at residues 126–165 (SAGA…MPVA), 169–211 (AHMR…LQLI), 216–257 (GHEH…CLKS), 260–299 (PHTE…SFGT), 322–362 (SHRF…FVAH), 382–419 (GHSS…VVRS), and 423–457 (LHSG…ILMK).

It belongs to the WD repeat LIS1/nudF family. Self-associates. Interacts with NDL1 and dynein.

The protein resides in the cytoplasm. The protein localises to the cytoskeleton. Its subcellular location is the spindle pole. In terms of biological role, positively regulates the activity of the minus-end directed microtubule motor protein dynein. Plays a central role in positioning the mitotic spindle at the bud neck during cell division. Targets cytoplasmic dynein to microtubule plus ends, thereby promoting dynein-mediated microtubule sliding along the bud cortex and consequently the movement of the mitotic spindle to the bud neck. This chain is Nuclear distribution protein PAC1, found in Lachancea thermotolerans (strain ATCC 56472 / CBS 6340 / NRRL Y-8284) (Yeast).